Here is a 474-residue protein sequence, read N- to C-terminus: Proline--tRNA ligase (474 aa).

Belongs to the class-II aminoacyl-tRNA synthetase family. ProS type 3 subfamily. Homodimer.

The protein resides in the cytoplasm. The catalysed reaction is tRNA(Pro) + L-proline + ATP = L-prolyl-tRNA(Pro) + AMP + diphosphate. In terms of biological role, catalyzes the attachment of proline to tRNA(Pro) in a two-step reaction: proline is first activated by ATP to form Pro-AMP and then transferred to the acceptor end of tRNA(Pro). In Phytoplasma australiense, this protein is Proline--tRNA ligase.